The sequence spans 109 residues: V-type proton ATPase 16 kDa proteolipid subunit (109 aa).

The chain crosses the membrane as a helical span at residues 1–20 (VPVVMAGVLGIYGLIIAVII). Topologically, residues 21–39 (STGINPKAKPYYLFDGYAH) are lumenal. Residues 40–61 (LSSGLACGLAGLAAGMAIGIVG) form a helical membrane-spanning segment. Residues 62 to 73 (DAGVRANAQQPK) lie on the Cytoplasmic side of the membrane. The helical transmembrane segment at 74–99 (LFVGMILILIFAEALALYGLIVGIIL) threads the bilayer. The Lumenal portion of the chain corresponds to 100 to 109 (SSRAGQSRAD).

It belongs to the V-ATPase proteolipid subunit family. V-ATPase is a heteromultimeric enzyme composed of a peripheral catalytic V1 complex (main components: subunits A, B, C, D, E, and F) attached to an integral membrane V0 proton pore complex (main component: the proteolipid protein; which is present as a hexamer that forms the proton-conducting pore). In terms of tissue distribution, high expression in the mesocotyl tip of etiolated seedlings compared to the base.

Its subcellular location is the vacuole membrane. Functionally, proton-conducting pore forming subunit of the membrane integral V0 complex of vacuolar ATPase. V-ATPase is responsible for acidifying a variety of intracellular compartments in eukaryotic cells. The protein is V-type proton ATPase 16 kDa proteolipid subunit of Zea mays (Maize).